A 262-amino-acid polypeptide reads, in one-letter code: Cytochrome b mRNA maturase bI2 (262 aa).

It belongs to the LAGLIDADG endonuclease family.

The protein resides in the mitochondrion. Its function is as follows. This protein is responsible for splicing and maturation of cytochrome b mRNA. Specifically, it may be responsible for the splicing specificity of the second intron. The polypeptide is Cytochrome b mRNA maturase bI2 (bI2) (Debaryomyces hansenii (strain ATCC 36239 / CBS 767 / BCRC 21394 / JCM 1990 / NBRC 0083 / IGC 2968) (Yeast)).